The following is a 234-amino-acid chain: Ubiquinone biosynthesis O-methyltransferase (234 aa).

S-adenosyl-L-methionine is bound by residues R37, G56, D77, and M121.

It belongs to the methyltransferase superfamily. UbiG/COQ3 family.

The catalysed reaction is a 3-demethylubiquinol + S-adenosyl-L-methionine = a ubiquinol + S-adenosyl-L-homocysteine + H(+). The enzyme catalyses a 3-(all-trans-polyprenyl)benzene-1,2-diol + S-adenosyl-L-methionine = a 2-methoxy-6-(all-trans-polyprenyl)phenol + S-adenosyl-L-homocysteine + H(+). It participates in cofactor biosynthesis; ubiquinone biosynthesis. In terms of biological role, O-methyltransferase that catalyzes the 2 O-methylation steps in the ubiquinone biosynthetic pathway. In Aromatoleum aromaticum (strain DSM 19018 / LMG 30748 / EbN1) (Azoarcus sp. (strain EbN1)), this protein is Ubiquinone biosynthesis O-methyltransferase.